We begin with the raw amino-acid sequence, 368 residues long: Histidinol-phosphate aminotransferase (368 aa).

Residue Lys229 is modified to N6-(pyridoxal phosphate)lysine.

The protein belongs to the class-II pyridoxal-phosphate-dependent aminotransferase family. Histidinol-phosphate aminotransferase subfamily. Homodimer. Pyridoxal 5'-phosphate is required as a cofactor.

The enzyme catalyses L-histidinol phosphate + 2-oxoglutarate = 3-(imidazol-4-yl)-2-oxopropyl phosphate + L-glutamate. It participates in amino-acid biosynthesis; L-histidine biosynthesis; L-histidine from 5-phospho-alpha-D-ribose 1-diphosphate: step 7/9. The chain is Histidinol-phosphate aminotransferase from Acidovorax sp. (strain JS42).